We begin with the raw amino-acid sequence, 525 residues long: Cytochrome P450 CYP72A613 (525 aa).

A helical transmembrane segment spans residues 2-22; the sequence is VFLFPTGTIIIWVLTILLAVI. Cys-473 is a heme binding site.

This sequence belongs to the cytochrome P450 family. As to expression, mainly expressed in leaves and seed pods and, to a lower extent, in flowers and stems.

It localises to the membrane. Its pathway is steroid metabolism; cholesterol metabolism. Its function is as follows. Involved in the biosynthesis of spiroketal steroid and saponin natural products from cholesterol such as diosgenin and analogs (e.g. furostanol and spirostanol), plant defense compounds used as main precursors for the industrial production of steroid hormones. During the 5,6-spiroketalization of cholesterol, may catalyze the 27-monohydroxylation of furostanol-type steroid to an intermediate product that undergoes a stereospecific formation of the terminal heterocycle to yield diosgenin. The chain is Cytochrome P450 CYP72A613 from Trigonella foenum-graecum (Fenugreek).